A 217-amino-acid chain; its full sequence is Putative peroxiredoxin Q, chloroplastic (217 aa).

A chloroplast-targeting transit peptide spans 1-66 (MAFAVSTACR…PSTTGRNRIV (66 aa)). The Thioredoxin domain maps to 70–217 (VSKGSAAPNF…GETLKILQSL (148 aa)). Cys112 functions as the Cysteine sulfenic acid (-SOH) intermediate in the catalytic mechanism. Cys112 and Cys117 are oxidised to a cystine.

The protein belongs to the peroxiredoxin family. BCP/PrxQ subfamily. Monomer.

Its subcellular location is the plastid. It localises to the chloroplast thylakoid lumen. It carries out the reaction a hydroperoxide + [thioredoxin]-dithiol = an alcohol + [thioredoxin]-disulfide + H2O. In terms of biological role, thiol-specific peroxidase that catalyzes the reduction of hydrogen peroxide and organic hydroperoxides to water and alcohols, respectively. Plays a role in cell protection against oxidative stress by detoxifying peroxides. The protein is Putative peroxiredoxin Q, chloroplastic of Oryza sativa subsp. indica (Rice).